The primary structure comprises 329 residues: Protein mlo2 (329 aa).

A UBR-type zinc finger spans residues 33–104 (DTCTYSMGYL…HSIPCNLRKS (72 aa)). The PHD-type zinc finger occupies 120–179 (GRFCICDTVYNPETEEGTMFQCILCEDWFHEKCLQKTNKGIAIPDAETFEWLVCSECSEK).

Belongs to the UBR7 family.

Not known, interfere with mitotic chromosome segregation when overexpressed. This Schizosaccharomyces pombe (strain 972 / ATCC 24843) (Fission yeast) protein is Protein mlo2 (mlo2).